Consider the following 327-residue polypeptide: Ribose operon repressor (327 aa).

One can recognise an HTH lacI-type domain in the interval 1-56 (MTTIKQVALEAGVSKSTVSRFIAQNGYVSDEAREKIERAIKKLNFRPNLSAQSLKT). Residues 4-23 (IKQVALEAGVSKSTVSRFIA) constitute a DNA-binding region (H-T-H motif).

Transcriptional repressor for the ribose rbsDACBK operon. This Lactococcus lactis subsp. lactis (strain IL1403) (Streptococcus lactis) protein is Ribose operon repressor (rbsR).